Reading from the N-terminus, the 241-residue chain is MRKIVIAGNWKMFKTQAESQEFLKEFLPALEETPQEREVLLCVPFTDLAILSQSLHGSLVQLGAQNVHWAENGAYTGEISGPMLTEIGVRYVIVGHSERRQFFGETDETVNLRLQAAQKYGLTPILCVGETKQQRDSGETESLIVSQLDKDLINVDQTNLVIAYEPIWAIGTGDTCETTEANRVIGLIRSQLKNSDVPIQYGGSVKPNNIDEIMAQPEIDGVLVGGASLEAASFARIVNYL.

9-11 (NWK) is a binding site for substrate. The active-site Electrophile is His-96. Residue Glu-165 is the Proton acceptor of the active site. Residues Gly-171, Ser-204, and 225 to 226 (GG) contribute to the substrate site.

The protein belongs to the triosephosphate isomerase family. Homodimer.

The protein resides in the cytoplasm. It carries out the reaction D-glyceraldehyde 3-phosphate = dihydroxyacetone phosphate. It functions in the pathway carbohydrate biosynthesis; gluconeogenesis. It participates in carbohydrate degradation; glycolysis; D-glyceraldehyde 3-phosphate from glycerone phosphate: step 1/1. Functionally, involved in the gluconeogenesis. Catalyzes stereospecifically the conversion of dihydroxyacetone phosphate (DHAP) to D-glyceraldehyde-3-phosphate (G3P). The protein is Triosephosphate isomerase of Nostoc sp. (strain PCC 7120 / SAG 25.82 / UTEX 2576).